A 2194-amino-acid chain; its full sequence is Genome polyprotein (2194 aa).

G2 carries the N-myristoyl glycine; by host lipid modification. The Cytoplasmic segment spans residues 2-1504; it reads GAQVSTQKTG…HVSRAFICLQ (1503 aa). The tract at residues 566 to 582 is amphipathic alpha-helix; sequence LYQNDPEGALNKAVGRV. Catalysis depends on for protease 2A activity residues H881 and D899. The Zn(2+) site is built by C916 and C918. The active-site For protease 2A activity is C970. Residues C976 and H978 each coordinate Zn(2+). The interval 1110 to 1182 is membrane-binding; it reads NNNWLKKFTE…EQSAPSQSDQ (73 aa). Positions 1110–1248 are oligomerization; sequence NNNWLKKFTE…SPGAGKSVAT (139 aa). The interval 1131–1135 is RNA-binding; that stretch reads AIKIQ. The 157-residue stretch at 1214 to 1370 folds into the SF3 helicase domain; the sequence is EKKMSNYIQF…SMYSQNGKIN (157 aa). Zn(2+) is bound by residues C1378, C1390, and C1395. The C4-type; degenerate zinc finger occupies 1378-1395; it reads CDEECCPVNFKRCCPLVC. The RNA-binding stretch occupies residues 1422–1429; the sequence is EYNHRHSV. Residues 1433 to 1438 form an oligomerization region; the sequence is LEALFQ. An intramembrane segment occupies 1505 to 1520; the sequence is ALTTFVSVAGIIYIIY. At 1521-2194 the chain is on the cytoplasmic side; sequence KLFAGFQGAY…TLRRKWLDSF (674 aa). Y1530 is modified (O-(5'-phospho-RNA)-tyrosine). Residues 1550–1728 enclose the Peptidase C3 domain; it reads GPAFEFAVAM…FSAALLRHYF (179 aa). Residues H1589, E1620, and C1696 each act as for protease 3C activity in the active site. The RdRp catalytic domain occupies 1959 to 2075; it reads GHLIAFDYSG…SYPHPIDASL (117 aa). D1965 and D2061 together coordinate Mg(2+).

The protein belongs to the picornaviruses polyprotein family. As to quaternary structure, interacts with capsid protein VP1 and capsid protein VP3 to form heterotrimeric protomers. In terms of assembly, interacts with capsid protein VP0, and capsid protein VP3 to form heterotrimeric protomers. Five protomers subsequently associate to form pentamers which serve as building blocks for the capsid. Interacts with capsid protein VP2, capsid protein VP3 and capsid protein VP4 following cleavage of capsid protein VP0. Interacts with capsid protein VP1 and capsid protein VP3 in the mature capsid. As to quaternary structure, interacts with capsid protein VP0 and capsid protein VP1 to form heterotrimeric protomers. Five protomers subsequently associate to form pentamers which serve as building blocks for the capsid. Interacts with capsid protein VP4 in the mature capsid. Interacts with protein 2C; this interaction may be important for virion morphogenesis. In terms of assembly, interacts with capsid protein VP1 and capsid protein VP3. Homodimer. As to quaternary structure, homohexamer; forms a hexameric ring structure with 6-fold symmetry characteristic of AAA+ ATPases. Interacts (via N-terminus) with host RTN3 (via reticulon domain); this interaction is important for viral replication. Interacts with capsid protein VP3; this interaction may be important for virion morphogenesis. In terms of assembly, interacts with protein 3CD. Homodimer. Interacts with host GBF1. Interacts (via GOLD domain) with host ACBD3 (via GOLD domain); this interaction allows the formation of a viral protein 3A/ACBD3 heterotetramer with a 2:2 stoichiometry, which will stimulate the recruitment of host PI4KB in order to synthesize PI4P at the viral RNA replication sites. As to quaternary structure, interacts with RNA-directed RNA polymerase. In terms of assembly, interacts with protein 3AB and with RNA-directed RNA polymerase. Interacts with Viral protein genome-linked and with protein 3CD. Requires Mg(2+) as cofactor. Post-translationally, specific enzymatic cleavages in vivo by the viral proteases yield processing intermediates and the mature proteins. In terms of processing, myristoylation is required for the formation of pentamers during virus assembly. Further assembly of 12 pentamers and a molecule of genomic RNA generates the provirion. During virion maturation, immature virions are rendered infectious following cleavage of VP0 into VP4 and VP2. This maturation seems to be an autocatalytic event triggered by the presence of RNA in the capsid and it is followed by a conformational change infectious virion. Post-translationally, myristoylation is required during RNA encapsidation and formation of the mature virus particle. In terms of processing, VPg is uridylylated by the polymerase into VPg-pUpU. This acts as a nucleotide-peptide primer for the genomic RNA replication.

It is found in the virion. Its subcellular location is the host cytoplasm. The protein localises to the host cytoplasmic vesicle membrane. The protein resides in the host nucleus. It catalyses the reaction a ribonucleoside 5'-triphosphate + H2O = a ribonucleoside 5'-diphosphate + phosphate + H(+). The enzyme catalyses Selective cleavage of Tyr-|-Gly bond in the picornavirus polyprotein.. It carries out the reaction RNA(n) + a ribonucleoside 5'-triphosphate = RNA(n+1) + diphosphate. The catalysed reaction is Selective cleavage of Gln-|-Gly bond in the poliovirus polyprotein. In other picornavirus reactions Glu may be substituted for Gln, and Ser or Thr for Gly.. With respect to regulation, replication or transcription is subject to high level of random mutations by the nucleotide analog ribavirin. Functionally, forms an icosahedral capsid of pseudo T=3 symmetry with capsid proteins VP2 and VP3. The capsid is 300 Angstroms in diameter, composed of 60 copies of each capsid protein and enclosing the viral positive strand RNA genome. Capsid protein VP1 mainly forms the vertices of the capsid. Capsid protein VP1 interacts with host cell receptor to provide virion attachment to target host cells. This attachment induces virion internalization. Tyrosine kinases are probably involved in the entry process. After binding to its receptor, the capsid undergoes conformational changes. Capsid protein VP1 N-terminus (that contains an amphipathic alpha-helix) and capsid protein VP4 are externalized. Together, they shape a pore in the host membrane through which viral genome is translocated to host cell cytoplasm. Its function is as follows. Forms an icosahedral capsid of pseudo T=3 symmetry with capsid proteins VP2 and VP3. The capsid is 300 Angstroms in diameter, composed of 60 copies of each capsid protein and enclosing the viral positive strand RNA genome. In terms of biological role, lies on the inner surface of the capsid shell. After binding to the host receptor, the capsid undergoes conformational changes. Capsid protein VP4 is released, Capsid protein VP1 N-terminus is externalized, and together, they shape a pore in the host membrane through which the viral genome is translocated into the host cell cytoplasm. Component of immature procapsids, which is cleaved into capsid proteins VP4 and VP2 after maturation. Allows the capsid to remain inactive before the maturation step. Functionally, cysteine protease that cleaves viral polyprotein and specific host proteins. It is responsible for the autocatalytic cleavage between the P1 and P2 regions, which is the first cleavage occurring in the polyprotein. Also cleaves the host translation initiation factor EIF4G1, in order to shut down the capped cellular mRNA translation. Inhibits the host nucleus-cytoplasm protein and RNA trafficking by cleaving host members of the nuclear pores. Counteracts stress granule formation probably by antagonizing its assembly or promoting its dissassembly. Its function is as follows. Plays an essential role in the virus replication cycle by acting as a viroporin. Creates a pore in the host endoplasmic reticulum and as a consequence releases Ca2+ in the cytoplasm of infected cell. In turn, high levels of cytoplasmic calcium may trigger membrane trafficking and transport of viral ER-associated proteins to viroplasms, sites of viral genome replication. In terms of biological role, induces and associates with structural rearrangements of intracellular membranes. Displays RNA-binding, nucleotide binding and NTPase activities. May play a role in virion morphogenesis and viral RNA encapsidation by interacting with the capsid protein VP3. Localizes the viral replication complex to the surface of membranous vesicles. Together with protein 3CD binds the Cis-Active RNA Element (CRE) which is involved in RNA synthesis initiation. Acts as a cofactor to stimulate the activity of 3D polymerase, maybe through a nucleid acid chaperone activity. Functionally, localizes the viral replication complex to the surface of membranous vesicles. It inhibits host cell endoplasmic reticulum-to-Golgi apparatus transport and causes the disassembly of the Golgi complex, possibly through GBF1 interaction. This would result in depletion of MHC, trail receptors and IFN receptors at the host cell surface. Plays an essential role in viral RNA replication by recruiting ACBD3 and PI4KB at the viral replication sites, thereby allowing the formation of the rearranged membranous structures where viral replication takes place. Its function is as follows. Acts as a primer for viral RNA replication and remains covalently bound to viral genomic RNA. VPg is uridylylated prior to priming replication into VPg-pUpU. The oriI viral genomic sequence may act as a template for this. The VPg-pUpU is then used as primer on the genomic RNA poly(A) by the RNA-dependent RNA polymerase to replicate the viral genome. During genome replication, the VPg-RNA linkage is removed by the host TDP2, thereby accelerating replication. During the late stage of the replication cycle, host TDP2 is excluded from sites of viral RNA synthesis and encapsidation, allowing for the generation of progeny virions. In terms of biological role, involved in the viral replication complex and viral polypeptide maturation. It exhibits protease activity with a specificity and catalytic efficiency that is different from protease 3C. Protein 3CD lacks polymerase activity. Protein 3CD binds to the 5'UTR of the viral genome. Replicates the viral genomic RNA on the surface of intracellular membranes. May form linear arrays of subunits that propagate along a strong head-to-tail interaction called interface-I. Covalently attaches UMP to a tyrosine of VPg, which is used to prime RNA synthesis. The positive stranded RNA genome is first replicated at virus induced membranous vesicles, creating a dsRNA genomic replication form. This dsRNA is then used as template to synthesize positive stranded RNA genomes. ss(+)RNA genomes are either translated, replicated or encapsidated. Functionally, major viral protease that mediates proteolytic processing of the polyprotein. Cleaves host EIF5B, contributing to host translation shutoff. Also cleaves host PABPC1, contributing to host translation shutoff. Cleaves host NLRP1, triggers host N-glycine-mediated degradation of the autoinhibitory NLRP1 N-terminal fragment. In Homo sapiens (Human), this protein is Genome polyprotein.